The chain runs to 149 residues: Putative pre-16S rRNA nuclease (149 aa).

Belongs to the YqgF nuclease family.

The protein resides in the cytoplasm. Could be a nuclease involved in processing of the 5'-end of pre-16S rRNA. The polypeptide is Putative pre-16S rRNA nuclease (Cupriavidus metallidurans (strain ATCC 43123 / DSM 2839 / NBRC 102507 / CH34) (Ralstonia metallidurans)).